The chain runs to 498 residues: Ammonium transporter 1 member 3 (498 aa).

The next 11 membrane-spanning stretches (helical) occupy residues 41 to 61 (LLFSAYLVFAMQLGFAMLCAG), 76 to 96 (VLDAAAGALFYYLFGFAFAFG), 122 to 142 (FFLFQWAFAIAAAGITSGSIA), 150 to 170 (YLIYSAFLTGFVYPVVSHWFW), 194 to 214 (FAGSGVVHLVGGIAGLWGAFI), 238 to 258 (LVVLGTFLLWFGWFGFNPGSF), 277 to 299 (AVGRTAVTTSLAGSVAALTTLYG), 307 to 327 (WNVTDVCNGLLGGFAAITAGC), 329 to 349 (VVDPWASVICGFVSAWVLIGC), 362 to 382 (LEATQLHAGCGAWGIIFTALF), and 414 to 434 (IVQILVIVGWVSATMGTLFYV). The tract at residues 473–498 (RAKSAAETARVEPRKSPEQAAAGQFV) is disordered.

The protein belongs to the ammonia transporter channel (TC 1.A.11.2) family. In terms of tissue distribution, expressed in roots.

The protein resides in the membrane. Its function is as follows. Ammonium transporter probably involved in ammonium uptake from the soil. This chain is Ammonium transporter 1 member 3 (AMT1-3), found in Oryza sativa subsp. japonica (Rice).